A 360-amino-acid chain; its full sequence is UDP-3-O-acylglucosamine N-acyltransferase (360 aa).

His-248 acts as the Proton acceptor in catalysis.

The protein belongs to the transferase hexapeptide repeat family. LpxD subfamily. As to quaternary structure, homotrimer.

The catalysed reaction is a UDP-3-O-[(3R)-3-hydroxyacyl]-alpha-D-glucosamine + a (3R)-hydroxyacyl-[ACP] = a UDP-2-N,3-O-bis[(3R)-3-hydroxyacyl]-alpha-D-glucosamine + holo-[ACP] + H(+). It participates in bacterial outer membrane biogenesis; LPS lipid A biosynthesis. Its function is as follows. Catalyzes the N-acylation of UDP-3-O-acylglucosamine using 3-hydroxyacyl-ACP as the acyl donor. Is involved in the biosynthesis of lipid A, a phosphorylated glycolipid that anchors the lipopolysaccharide to the outer membrane of the cell. The chain is UDP-3-O-acylglucosamine N-acyltransferase from Chlamydia pneumoniae (Chlamydophila pneumoniae).